Reading from the N-terminus, the 363-residue chain is Chorismate synthase (363 aa).

Arg-48 and Arg-54 together coordinate NADP(+). FMN-binding positions include Arg-125–Ser-127, Asn-237–Ala-238, Gly-277, Lys-292–Ser-296, and Arg-318.

This sequence belongs to the chorismate synthase family. In terms of assembly, homotetramer. Requires FMNH2 as cofactor.

It carries out the reaction 5-O-(1-carboxyvinyl)-3-phosphoshikimate = chorismate + phosphate. The protein operates within metabolic intermediate biosynthesis; chorismate biosynthesis; chorismate from D-erythrose 4-phosphate and phosphoenolpyruvate: step 7/7. Functionally, catalyzes the anti-1,4-elimination of the C-3 phosphate and the C-6 proR hydrogen from 5-enolpyruvylshikimate-3-phosphate (EPSP) to yield chorismate, which is the branch point compound that serves as the starting substrate for the three terminal pathways of aromatic amino acid biosynthesis. This reaction introduces a second double bond into the aromatic ring system. In Pseudomonas fluorescens (strain Pf0-1), this protein is Chorismate synthase.